The following is a 228-amino-acid chain: uncharacterized protein (228 aa).

Residues 77–79 (TTA), glycine 113, valine 133, and 140–142 (PSL) each bind S-adenosyl-L-methionine.

Belongs to the class IV-like SAM-binding methyltransferase superfamily. RNA methyltransferase TrmH family.

This is an uncharacterized protein from Escherichia coli (strain K12).